The following is a 90-amino-acid chain: Acylphosphatase (90 aa).

The Acylphosphatase-like domain occupies 5–90; it reads CEKFVVSGIV…CREYQGFEIL (86 aa). Catalysis depends on residues Arg20 and Asn38.

The protein belongs to the acylphosphatase family.

It catalyses the reaction an acyl phosphate + H2O = a carboxylate + phosphate + H(+). The chain is Acylphosphatase (acyP) from Vibrio vulnificus (strain CMCP6).